A 210-amino-acid chain; its full sequence is Orotate phosphoribosyltransferase (210 aa).

Residues arginine 96, lysine 100, histidine 102, and 122–130 (EDLISTGGS) each bind 5-phospho-alpha-D-ribose 1-diphosphate. Residue serine 126 participates in orotate binding.

The protein belongs to the purine/pyrimidine phosphoribosyltransferase family. PyrE subfamily. Homodimer. Mg(2+) is required as a cofactor.

It carries out the reaction orotidine 5'-phosphate + diphosphate = orotate + 5-phospho-alpha-D-ribose 1-diphosphate. It functions in the pathway pyrimidine metabolism; UMP biosynthesis via de novo pathway; UMP from orotate: step 1/2. In terms of biological role, catalyzes the transfer of a ribosyl phosphate group from 5-phosphoribose 1-diphosphate to orotate, leading to the formation of orotidine monophosphate (OMP). The protein is Orotate phosphoribosyltransferase of Streptococcus pneumoniae serotype 4 (strain ATCC BAA-334 / TIGR4).